The chain runs to 541 residues: Protein wntless homolog (541 aa).

The Cytoplasmic segment spans residues 1–15; sequence MAGAIIENMGTKKLC. A helical membrane pass occupies residues 16–36; that stretch reads IVGGILLVFQIIAFLVGGLIA. Residues 37-232 are Lumenal-facing; that stretch reads PGPTTAVSYM…GIHQNGGFTK (196 aa). Positions 101-232 are interaction with Wnt proteins; the sequence is MEMSPWFQFM…GIHQNGGFTK (132 aa). A helical membrane pass occupies residues 233-253; that stretch reads VWFAMKTFLTPSIFIIMVWYW. The Cytoplasmic segment spans residues 254-268; it reads RRITMMSRPPVLLEK. A helical transmembrane segment spans residues 269-289; it reads VIFALGISMTFINIPVEWFSI. The Lumenal portion of the chain corresponds to 290-303; sequence GFDWTWMLLFGDIR. Residues 304–324 traverse the membrane as a helical segment; sequence QGIFYAMLLSFWIIFCGEHMM. At 325 to 331 the chain is on the cytoplasmic side; it reads DQHERNH. A helical transmembrane segment spans residues 332-352; that stretch reads IAGYWKQVGPIAVGSFCLFIF. Residues 353–380 lie on the Lumenal side of the membrane; it reads DMCERGVQLTNPFYSIWTTDIGTELAMA. The chain crosses the membrane as a helical span at residues 381–401; that stretch reads FIIVAGICLCLYFLFLCFMVF. Residues 402–431 are Cytoplasmic-facing; it reads QVFRNISGKQSSLPAMSKVRRLHYEGLIFR. A helical membrane pass occupies residues 432–452; that stretch reads FKFLMLITLACAAMTVIFFIV. Over 453 to 471 the chain is Lumenal; sequence SQVTEGHWKWGGVTVQVNS. The helical transmembrane segment at 472 to 492 threads the bilayer; sequence AFFTGIYGMWNLYVFALMFLY. Over 493-541 the chain is Cytoplasmic; sequence APSHKNYGEDQSNGDLGVHSGEELQLTTTITHVDGPTEIYKLTRKEAQE.

It belongs to the wntless family. Interacts with WNT3A. Interacts with WNT1, WNT3 and WNT5A.

The protein localises to the golgi apparatus membrane. It is found in the cytoplasmic vesicle membrane. It localises to the cell membrane. The protein resides in the endoplasmic reticulum membrane. Its subcellular location is the early endosome membrane. In terms of biological role, regulates Wnt proteins sorting and secretion in a feedback regulatory mechanism. This reciprocal interaction plays a key role in the regulation of expression, subcellular location, binding and organelle-specific association of Wnt proteins. Also plays an important role in establishment of the anterior-posterior body axis formation during development. The polypeptide is Protein wntless homolog (WLS) (Pongo abelii (Sumatran orangutan)).